Reading from the N-terminus, the 284-residue chain is BES1/BZR1 homolog protein 3 (284 aa).

2 disordered regions span residues 1 to 21 (MTSGTRTPTWKERENNKRRER) and 85 to 116 (GSTSASPCSSYQHSPRASYNPSPSSSSFPSPT). The required for DNA-binding stretch occupies residues 6–88 (RTPTWKEREN…RMDLMNGSTS (83 aa)). Residues 85–97 (GSTSASPCSSYQH) are compositionally biased toward polar residues. Low complexity predominate over residues 98 to 114 (SPRASYNPSPSSSSFPS). Phosphothreonine is present on threonine 153.

This sequence belongs to the BZR/LAT61 family. In terms of processing, phosphorylated. Phosphorylation increases protein degradation.

In Arabidopsis thaliana (Mouse-ear cress), this protein is BES1/BZR1 homolog protein 3 (BEH3).